A 174-amino-acid polypeptide reads, in one-letter code: F-box protein At1g70360 (174 aa).

The 39-residue stretch at 136 to 174 (PPCFISLPRELKHKILESLPGVDIGTLACVSSELRDMAS) folds into the F-box domain.

The chain is F-box protein At1g70360 from Arabidopsis thaliana (Mouse-ear cress).